Reading from the N-terminus, the 252-residue chain is MKILIAANWKMNKNRLEAKDMIEKLMSMPEGIPPQRDIVLFPPFLAIDTIKEKLKNSTIVIGAQNFYPAPSGAFTGEISLEMLKDVGCSWVLIGHSERRHIIGELPTLIEQKTKLALSYGFSIILCIGETAQEREAGLVNSVLEQQLRTSLTDIPSKAISQLVIAYEPVWAIGTGKVASQQDIITAHTLIRKILHNMIGNTSQNIRILYGGSVNSENASSILELDNVNGLLVGGASLQAESFMKIIHAGFSE.

Residue 8–10 (NWK) participates in substrate binding. Residue His-95 is the Electrophile of the active site. The active-site Proton acceptor is the Glu-167. Residues Gly-173, Ser-212, and 233–234 (GG) each bind substrate.

It belongs to the triosephosphate isomerase family. Homodimer.

The protein localises to the cytoplasm. It carries out the reaction D-glyceraldehyde 3-phosphate = dihydroxyacetone phosphate. It functions in the pathway carbohydrate biosynthesis; gluconeogenesis. Its pathway is carbohydrate degradation; glycolysis; D-glyceraldehyde 3-phosphate from glycerone phosphate: step 1/1. Involved in the gluconeogenesis. Catalyzes stereospecifically the conversion of dihydroxyacetone phosphate (DHAP) to D-glyceraldehyde-3-phosphate (G3P). This chain is Triosephosphate isomerase, found in Lawsonia intracellularis (strain PHE/MN1-00).